The following is a 70-amino-acid chain: ATP synthase subunit c (70 aa).

A run of 2 helical transmembrane segments spans residues 4–24 and 49–69; these read IAAA…NGLI and GIAL…LAFF.

The protein belongs to the ATPase C chain family. In terms of assembly, F-type ATPases have 2 components, F(1) - the catalytic core - and F(0) - the membrane proton channel. F(1) has five subunits: alpha(3), beta(3), gamma(1), delta(1), epsilon(1). F(0) has three main subunits: a(1), b(2) and c(10-14). The alpha and beta chains form an alternating ring which encloses part of the gamma chain. F(1) is attached to F(0) by a central stalk formed by the gamma and epsilon chains, while a peripheral stalk is formed by the delta and b chains. The F(1)F(0) complex interacts with SpoIIIJ and YqjG; YqgA is found in the same complex.

The protein resides in the cell membrane. Functionally, f(1)F(0) ATP synthase produces ATP from ADP in the presence of a proton or sodium gradient. F-type ATPases consist of two structural domains, F(1) containing the extramembraneous catalytic core and F(0) containing the membrane proton channel, linked together by a central stalk and a peripheral stalk. During catalysis, ATP synthesis in the catalytic domain of F(1) is coupled via a rotary mechanism of the central stalk subunits to proton translocation. In terms of biological role, key component of the F(0) channel; it plays a direct role in translocation across the membrane. A homomeric c-ring of between 10-14 subunits forms the central stalk rotor element with the F(1) delta and epsilon subunits. The protein is ATP synthase subunit c of Bacillus subtilis (strain 168).